A 96-amino-acid chain; its full sequence is Myoglobin (96 aa).

Positions 1 to 96 constitute a Globin domain; the sequence is GLSDGEWQLV…AKTKELGFLG (96 aa). A Phosphoserine modification is found at S3. Residue H61 coordinates nitrite. H61 contributes to the O2 binding site. A Phosphothreonine modification is found at T64.

Belongs to the globin family. In terms of assembly, monomeric.

It localises to the cytoplasm. Its subcellular location is the sarcoplasm. The catalysed reaction is Fe(III)-heme b-[protein] + nitric oxide + H2O = Fe(II)-heme b-[protein] + nitrite + 2 H(+). It carries out the reaction H2O2 + AH2 = A + 2 H2O. In terms of biological role, monomeric heme protein which primary function is to store oxygen and facilitate its diffusion within muscle tissues. Reversibly binds oxygen through a pentacoordinated heme iron and enables its timely and efficient release as needed during periods of heightened demand. Depending on the oxidative conditions of tissues and cells, and in addition to its ability to bind oxygen, it also has a nitrite reductase activity whereby it regulates the production of bioactive nitric oxide. Under stress conditions, like hypoxia and anoxia, it also protects cells against reactive oxygen species thanks to its pseudoperoxidase activity. This chain is Myoglobin (MB), found in Ailuropoda melanoleuca (Giant panda).